Reading from the N-terminus, the 1493-residue chain is Mitogen-activated protein kinase kinase kinase 1 (1493 aa).

Composition is skewed to low complexity over residues 1–23 and 33–42; these read MAAA…ASPE and GSGAPAAGAG. Disordered regions lie at residues 1 to 171 and 222 to 295; these read MAAA…DRPE and LQGE…EETS. A2 carries the post-translational modification N-acetylalanine. Phosphoserine is present on S21. Pro residues predominate over residues 84-94; the sequence is PPCPSTSPSPE. Low complexity-rich tracts occupy residues 95–108 and 135–151; these read PADA…FQPA and ARSP…APSG. The residue at position 137 (S137) is a Phosphoserine. The segment covering 152–171 has biased composition (basic and acidic residues); the sequence is REMENKETLKGLHKMDDRPE. The segment covering 230–257 has biased composition (low complexity); that stretch reads SAAPAPKGRRSPSPGSSPSGRSGKPESP. At S265 the chain carries Phosphoserine. T275 is subject to Phosphothreonine. Phosphoserine is present on residues S282, S287, and S290. The SWIM-type zinc finger occupies 328-356; that stretch reads YRVFIGPQNCSCGRGTFCIHLLFVMLRVF. The segment at 433 to 482 adopts an RING-type zinc-finger fold; that stretch reads CPICLLGMLDEESLTVCEDGCRNKLHHHCMSIWAEECRRNREPLICPLCR. Polar residues predominate over residues 496–506; the sequence is SSPVDSPTSLR. 4 disordered regions span residues 496–524, 866–910, 923–955, and 992–1060; these read SSPV…SQRR, DTLD…LSAS, VGLP…SPLS, and PCKI…ASKN. Residues S497, S521, and S910 each carry the phosphoserine modification. Low complexity predominate over residues 507-522; sequence GVQQPSSPQQPVAGSQ. 2 stretches are compositionally biased toward polar residues: residues 925 to 940 and 998 to 1014; these read LPSS…TVQT and ASPQ…QRTC. Phosphoserine is present on residues S999 and S1024. A compositionally biased stretch (polar residues) spans 1049 to 1060; it reads GSTSKLGDASKN. The Protein kinase domain maps to 1224–1489; the sequence is WLKGQQIGLG…SRELLKHPVF (266 aa). ATP-binding positions include 1230–1238 and K1253; that span reads IGLGAFSSC. The active-site Proton acceptor is the D1350. T1381 and T1393 each carry phosphothreonine; by autocatalysis.

Belongs to the protein kinase superfamily. STE Ser/Thr protein kinase family. MAP kinase kinase kinase subfamily. In terms of assembly, binds both upstream activators and downstream substrates in multimolecular complexes through its N-terminus. Oligomerizes after binding MAP4K2 or TRAF2. Interacts (via the kinase catalytic domain) with STK38. Interacts with GRIPAP1. The cofactor is Mg(2+). Post-translationally, autophosphorylated. Most highly expressed in spleen, kidney and lung.

The protein resides in the membrane. The catalysed reaction is L-seryl-[protein] + ATP = O-phospho-L-seryl-[protein] + ADP + H(+). It catalyses the reaction L-threonyl-[protein] + ATP = O-phospho-L-threonyl-[protein] + ADP + H(+). Its activity is regulated as follows. Activated by autophosphorylation on Thr-1381 and Thr-1393 following oligomerization. In terms of biological role, component of a protein kinase signal transduction cascade. Activates the ERK and JNK kinase pathways by phosphorylation of MAP2K1 and MAP2K4. May phosphorylate the MAPK8/JNK1 kinase. Activates CHUK and IKBKB, the central protein kinases of the NF-kappa-B pathway. The polypeptide is Mitogen-activated protein kinase kinase kinase 1 (Map3k1) (Rattus norvegicus (Rat)).